The sequence spans 311 residues: MAEIYLAGGCFWGLEEYFSRIEGVKKTTVGYANGQVESTNYQLIHQTDHAETVHLIYDEKRVSLREILLYYFRVIDPLSVNKQGNDVGRQYRTGVYYTNQADKAVIEQVFAEQEKQLGQKIAVELEPLRHYVLAEDYHQDYLKKNPGGYCHINVNDAYQPLVDPGQYEKPTDAELKEQLTQEQYQVTQLSATERPFHNAYNATFEEGIYVDVTTGEPLFFAGDKFESGCGWPSFSRPIAREVLRYYEDKSHGMERIEVRSRSGNAHLGHVFTDGPESAGGLRYCINSAALRFIPKEKMEAEGYAYLLQHMK.

The interval 1 to 155 (MAEIYLAGGC…PGGYCHINVN (155 aa)) is peptide methionine sulfoxide reductase A. C10 is an active-site residue. A MsrB domain is found at 172 to 295 (DAELKEQLTQ…NSAALRFIPK (124 aa)). Residue C284 is the Nucleophile of the active site.

It in the N-terminal section; belongs to the MsrA Met sulfoxide reductase family. In the C-terminal section; belongs to the MsrB Met sulfoxide reductase family.

It carries out the reaction L-methionyl-[protein] + [thioredoxin]-disulfide + H2O = L-methionyl-(S)-S-oxide-[protein] + [thioredoxin]-dithiol. The catalysed reaction is [thioredoxin]-disulfide + L-methionine + H2O = L-methionine (S)-S-oxide + [thioredoxin]-dithiol. It catalyses the reaction L-methionyl-[protein] + [thioredoxin]-disulfide + H2O = L-methionyl-(R)-S-oxide-[protein] + [thioredoxin]-dithiol. In terms of biological role, has an important function as a repair enzyme for proteins that have been inactivated by oxidation. Catalyzes the reversible oxidation-reduction of methionine sulfoxide in proteins to methionine. Involved in protection against oxidative stress when the bacterium enters the host bloodstream and required for maximal growth under aerobic and anaerobic conditions. The chain is Peptide methionine sulfoxide reductase MsrA/MsrB (msrAB) from Streptococcus gordonii (strain Challis / ATCC 35105 / BCRC 15272 / CH1 / DL1 / V288).